Reading from the N-terminus, the 293-residue chain is 4-hydroxy-tetrahydrodipicolinate synthase (293 aa).

Threonine 47 contacts pyruvate. Catalysis depends on tyrosine 135, which acts as the Proton donor/acceptor. Catalysis depends on lysine 164, which acts as the Schiff-base intermediate with substrate. Isoleucine 206 lines the pyruvate pocket.

Belongs to the DapA family. Homotetramer; dimer of dimers.

It localises to the cytoplasm. The enzyme catalyses L-aspartate 4-semialdehyde + pyruvate = (2S,4S)-4-hydroxy-2,3,4,5-tetrahydrodipicolinate + H2O + H(+). It participates in amino-acid biosynthesis; L-lysine biosynthesis via DAP pathway; (S)-tetrahydrodipicolinate from L-aspartate: step 3/4. Functionally, catalyzes the condensation of (S)-aspartate-beta-semialdehyde [(S)-ASA] and pyruvate to 4-hydroxy-tetrahydrodipicolinate (HTPA). This Flavobacterium psychrophilum (strain ATCC 49511 / DSM 21280 / CIP 103535 / JIP02/86) protein is 4-hydroxy-tetrahydrodipicolinate synthase.